The chain runs to 503 residues: ATP synthase subunit alpha (503 aa).

170-177 contacts ATP; sequence GDKQTGKT.

This sequence belongs to the ATPase alpha/beta chains family. F-type ATPases have 2 components, CF(1) - the catalytic core - and CF(0) - the membrane proton channel. CF(1) has five subunits: alpha(3), beta(3), gamma(1), delta(1), epsilon(1). CF(0) has three main subunits: a(1), b(2) and c(9-12). The alpha and beta chains form an alternating ring which encloses part of the gamma chain. CF(1) is attached to CF(0) by a central stalk formed by the gamma and epsilon chains, while a peripheral stalk is formed by the delta and b chains.

It localises to the cell inner membrane. It catalyses the reaction ATP + H2O + 4 H(+)(in) = ADP + phosphate + 5 H(+)(out). In terms of biological role, produces ATP from ADP in the presence of a proton gradient across the membrane. The alpha chain is a regulatory subunit. This is ATP synthase subunit alpha from Helicobacter pylori (strain G27).